The primary structure comprises 425 residues: Pre-mRNA-splicing factor PRP46 (425 aa).

WD repeat units lie at residues 111-151 (GHTG…LKVT), 154-193 (GHIM…VVRD), 196-235 (GTLS…CVLT), 238-279 (GHRG…KTLT), 281-320 (HKRN…TNFN), 322-360 (EALG…KFQK), and 371-410 (ESEK…TQDS).

This sequence belongs to the WD repeat PRL1/PRL2 family. In terms of assembly, associated with the spliceosome.

It is found in the cytoplasm. The protein resides in the nucleus. Its function is as follows. Involved in pre-mRNA splicing and required for cell cycle progression at G2/M. This chain is Pre-mRNA-splicing factor PRP46 (PRP46), found in Eremothecium gossypii (strain ATCC 10895 / CBS 109.51 / FGSC 9923 / NRRL Y-1056) (Yeast).